The sequence spans 101 residues: Small ubiquitin-related modifier 5 (101 aa).

Positions 17–21 match the Required for PML-NB formation motif; the sequence is IKDED. Residue K18 forms a Glycyl lysine isopeptide (Lys-Gly) (interchain with G-Cter in SUMO1P1/SUMO5) linkage. The Ubiquitin-like domain maps to 20–97; sequence EDIKLRVIGQ…IEVYQEQIGG (78 aa). G97 participates in a covalent cross-link: Glycyl lysine isopeptide (Gly-Lys) (interchain with K-? in acceptor proteins). A propeptide spanning residues 98–101 is cleaved from the precursor; the sequence is HSTV.

This sequence belongs to the ubiquitin family. SUMO subfamily. In terms of assembly, interacts with CBX4. Interacts with PIAS1. Found in a complex with SAE2. Interacts with UBE2I. Interacts with SP100. Interacts with HIPK2. Interacts with DAXX. Interacts with PML-RARA oncoprotein; PML-RARalpha outcompetes PML for SUMO1P1/SUMO5 conjugation. Post-translationally, cleavage of precursor form is necessary for function. Autosumoylated at Lys-18. High expression levels in testes and peripheral blood leukocyte. Expressed also in lung, placenta, liver, spleen and thymus.

It is found in the nucleus. Functionally, ubiquitin-like protein that can be covalently attached to proteins as a monomer or as a lysine-linked polymer. Regulates the life cycle of promyelocytic leukemia nuclear bodies (PML-NBs). PolySUMO1P1/SUMO5 conjugation on 'Lys-160' of PML facilitates recruitment of PML-NB components, which enlarges PML-NB. SUMO1P1/SUMO5 also increases polySUMO2/3 conjugation of PML, resulting in RNF4-mediated disruption of PML-NBs. The protein is Small ubiquitin-related modifier 5 of Homo sapiens (Human).